The primary structure comprises 1391 residues: Periaxin (1391 aa).

Ser7 is subject to Phosphoserine. The PDZ domain occupies 16-99 (LVEIIVETEA…YKVSFCLKRT (84 aa)). A Nuclear export signal motif is present at residues 70 to 84 (VFFENFKYEDALRLL). The Nuclear localization signal signature appears at 118-196 (KGPRAKVAKL…RLQLPRLRVR (79 aa)). Ser243 is subject to Phosphoserine. 12 consecutive repeat copies span residues 432–436 (GPEVK), 440–444 (GPEVK), 448–452 (VPEVK), 456–460 (VPEAA), 464–468 (VQLPE), 469–473 (VQLPK), 474–478 (MSDMK), 482–486 (IPEMV), 487–491 (VPDVR), 495–499 (VQLPK), 500–504 (VPEMK), and 508–512 (MKLPK). The interval 432–719 (GPEVKAPTGP…MQVSQVPEVQ (288 aa)) is 45 X 5 AA approximate tandem repeats of [LVMGIED]-[PQSKHARMI]-[EDKLVTR]-[LIVMAP]-[AQKHRPEVSD]; that may have a tripeptide spacer of [LVIDEA]-[PMSVI]-[KEATDQ]. Residues 513 to 517 (WPEMA) form a 13; approximate repeat. 32 consecutive repeat copies span residues 521–525 (VHLPD), 526–530 (VQLPK), 534–538 (MKLPK), 539–543 (VPEMA), 547–551 (VHLPD), 552–556 (VQLPK), 560–564 (MKLPE), 565–569 (MKLPK), 573–577 (MAVPD), 578–582 (VRLPE), 583–587 (VQLPK), 591–595 (VKLPK), 596–600 (MPEMA), 601–605 (VPDVH), 609–613 (LQLPK), 614–618 (MSEVK), 619–623 (LPKMP), 627–631 (VPDVR), 632–636 (LPEVQ), 637–641 (LPKVS), 645–649 (LPKMP), 650–654 (EMTMP), 655–659 (DIRLP), 663–667 (LPKVP), 671–675 (LPEMK), 676–680 (LPEIK), 684–688 (VPDMA), 689–693 (VPDVP), 697–701 (LQLPK), 702–706 (VSDIR), 707–711 (LPEMQ), and 715–719 (VPEVQ). A phosphoserine mark is found at Ser848, Ser979, Ser1028, Ser1279, Ser1283, Ser1285, Ser1293, Ser1331, and Ser1337. The tract at residues 1267–1366 (LPRVGFSQSE…DREEGGFRVR (100 aa)) is disordered. A compositionally biased stretch (low complexity) spans 1275-1285 (SESVSGEGSPS). Basic and acidic residues predominate over residues 1354–1363 (GSRDREEGGF). Residue Ser1369 is modified to Phosphoserine.

The protein belongs to the periaxin family. As to quaternary structure, homodimer (via PDZ domain). Interacts with SCN10A. Found in a complex with SCN10A. Interacts with DRP2. Identified in a dystroglycan complex that contains at least PRX, DRP2, UTRN, DMD and DAG1. Detected in a complex composed of at least EZR, AHNAK, PPL and PRX. Identified in a complex with EZR, AHNAK, BFSP1, BFSP2, ANK2, PLEC, VIM and spectrin. Detected in myelinating Schwann cells in intramuscular nerves in triangularis sterni. Detected in sciatic nerve. Detected in eye lens fiber cells. Isoform 1 is detected in myelinating Schwann cells in sciatic nerve. Isoform 2 is detected in myelinating Schwann cells in sciatic nerve (at protein level). Detected in sciatic nerve.

It localises to the cell membrane. The protein localises to the cell junction. Its subcellular location is the nucleus. It is found in the cytoplasm. In terms of biological role, scaffolding protein that functions as part of a dystroglycan complex in Schwann cells, and as part of EZR and AHNAK-containing complexes in eye lens fiber cells. Required for the maintenance of the peripheral myelin sheath that is essential for normal transmission of nerve impulses and normal perception of sensory stimuli. Required for normal transport of MBP mRNA from the perinuclear to the paranodal regions. Required for normal remyelination after nerve injury. Required for normal elongation of Schwann cells and normal length of the internodes between the nodes of Ranvier. The demyelinated nodes of Ranvier permit saltatory transmission of nerve impulses; shorter internodes cause slower transmission of nerve impulses. Required for the formation of appositions between the abaxonal surface of the myelin sheath and the Schwann cell plasma membrane; the Schwann cell cytoplasm is restricted to regions between these appositions. Required for the formation of Cajal bands and of Schmidt-Lanterman incisures that correspond to short, cytoplasm-filled regions on myelinated nerves. Recruits DRP2 to the Schwann cell plasma membrane. Required for normal protein composition of the eye lens fiber cell plasma membrane and normal eye lens fiber cell morphology. The sequence is that of Periaxin (Prx) from Mus musculus (Mouse).